The sequence spans 116 residues: UPF0654 protein C869.09 (116 aa).

The disordered stretch occupies residues 32-116 (LKEHGSESHY…LLEEVDDESK (85 aa)). A compositionally biased stretch (polar residues) spans 39 to 48 (SHYTTGTTRG). Basic and acidic residues predominate over residues 49-64 (QKADADDAGELREEGF).

The protein belongs to the UPF0654 (con-6) family.

Its subcellular location is the cytoplasm. The protein localises to the nucleus. The protein is UPF0654 protein C869.09 of Schizosaccharomyces pombe (strain 972 / ATCC 24843) (Fission yeast).